Here is a 225-residue protein sequence, read N- to C-terminus: Orotate phosphoribosyltransferase (225 aa).

K31 serves as a coordination point for 5-phospho-alpha-D-ribose 1-diphosphate. 39–40 (FF) is a binding site for orotate. 5-phospho-alpha-D-ribose 1-diphosphate-binding positions include 78-79 (YK), R105, K106, K109, H111, and 130-138 (DDVLTSGKA). Orotate is bound by residues T134 and R163.

The protein belongs to the purine/pyrimidine phosphoribosyltransferase family. PyrE subfamily. As to quaternary structure, homodimer.

It catalyses the reaction orotidine 5'-phosphate + diphosphate = orotate + 5-phospho-alpha-D-ribose 1-diphosphate. Its pathway is pyrimidine metabolism; UMP biosynthesis via de novo pathway; UMP from orotate: step 1/2. In terms of biological role, catalyzes the transfer of a ribosyl phosphate group from 5-phosphoribose 1-diphosphate to orotate, leading to the formation of orotidine monophosphate (OMP). The chain is Orotate phosphoribosyltransferase (URA5) from Cryptococcus neoformans var. grubii serotype A (strain H99 / ATCC 208821 / CBS 10515 / FGSC 9487) (Filobasidiella neoformans var. grubii).